Reading from the N-terminus, the 234-residue chain is Leucyl/phenylalanyl-tRNA--protein transferase (234 aa).

Belongs to the L/F-transferase family.

It is found in the cytoplasm. It carries out the reaction N-terminal L-lysyl-[protein] + L-leucyl-tRNA(Leu) = N-terminal L-leucyl-L-lysyl-[protein] + tRNA(Leu) + H(+). It catalyses the reaction N-terminal L-arginyl-[protein] + L-leucyl-tRNA(Leu) = N-terminal L-leucyl-L-arginyl-[protein] + tRNA(Leu) + H(+). The catalysed reaction is L-phenylalanyl-tRNA(Phe) + an N-terminal L-alpha-aminoacyl-[protein] = an N-terminal L-phenylalanyl-L-alpha-aminoacyl-[protein] + tRNA(Phe). Its function is as follows. Functions in the N-end rule pathway of protein degradation where it conjugates Leu, Phe and, less efficiently, Met from aminoacyl-tRNAs to the N-termini of proteins containing an N-terminal arginine or lysine. This Shigella flexneri serotype 5b (strain 8401) protein is Leucyl/phenylalanyl-tRNA--protein transferase.